Consider the following 229-residue polypeptide: MKLSADLKAFEGRIGHQFREPERLLRAVTHSSLSSVTRSDNQRLEFLGDRVLGLVMAEALLAADRAASEGQLAPRFNALVRKETCAAVAREVALGDVLKLGRSEMMSGGRRKEALLGDALEAVIAAVYLDAGFEAARQLVLRLWGARIAQVERDARDAKTALQEWAQARGLPPPTYEAVDRSGPDHAPIFTVEVRLGNGETDRAAAGTKRVAEQAAARALLARMEARHD.

The region spanning 7–132 (LKAFEGRIGH…VIAAVYLDAG (126 aa)) is the RNase III domain. E45 is a binding site for Mg(2+). D49 is a catalytic residue. Mg(2+) contacts are provided by D118 and E121. The active site involves E121. The DRBM domain maps to 157–226 (DAKTALQEWA…ARALLARMEA (70 aa)).

This sequence belongs to the ribonuclease III family. Homodimer. The cofactor is Mg(2+).

It is found in the cytoplasm. The enzyme catalyses Endonucleolytic cleavage to 5'-phosphomonoester.. Its function is as follows. Digests double-stranded RNA. Involved in the processing of primary rRNA transcript to yield the immediate precursors to the large and small rRNAs (23S and 16S). Processes some mRNAs, and tRNAs when they are encoded in the rRNA operon. Processes pre-crRNA and tracrRNA of type II CRISPR loci if present in the organism. The chain is Ribonuclease 3 from Cereibacter sphaeroides (strain ATCC 17029 / ATH 2.4.9) (Rhodobacter sphaeroides).